The chain runs to 409 residues: NDP-glycosyltransferase ltbB (409 aa).

N36 carries an N-linked (GlcNAc...) asparagine glycan. The helical transmembrane segment at 319–339 threads the bilayer; sequence IWAFAYVWAWLQTLYTAPWIA.

The protein belongs to the GT2 glycosyltransferase family.

The protein localises to the membrane. Its pathway is secondary metabolite biosynthesis. In terms of biological role, NDP-glycosyltransferase; part of the gene cluster that mediates the biosynthesis of luteodienoside A, a glycosylated polyketide consisting of an unusual 1-O-beta-D-glucopyranosyl-myo-inositol (glucinol) ester of 3-hydroxy-2,2,4-trimethylocta-4,6-dienoic acid. LtbB likely serves as a glucinol synthase by transferring D-glucose to myo-inositol using NDP-glucose as a substrate. The ltbA carnitine O-acyltransferase (cAT) domain uses glucinol produced by the glycosyltransferase ltbB as an offloading substrate to release luteodienoside A from the HR-PKS. Since ltbA and ltbB are sufficient for the biosynthesis of luteodienoside A, the functions of the methyltransferase ltbC and the FAD-binding monooxygenase ltbD within the pathway remain obscur. This Aspergillus luteorubrus protein is NDP-glycosyltransferase ltbB.